The following is a 419-amino-acid chain: Septin-2 (419 aa).

The region spanning 40-306 is the Septin-type G domain; that stretch reads NGFVFNVMCI…ELYRQKRLEQ (267 aa). Positions 50 to 57 are G1 motif; it reads GETGLGKS. GTP is bound by residues 50–57, Ser-79, Gly-105, 186–194, Gly-240, and Arg-255; these read GETGLGKS and KADTISKVE. The segment at 102–105 is G3 motif; sequence DTVG. The tract at residues 185–188 is G4 motif; that stretch reads AKAD. The interval 259-269 is important for dimerization; the sequence is WGTVQVENETH.

It belongs to the TRAFAC class TrmE-Era-EngA-EngB-Septin-like GTPase superfamily. Septin GTPase family. In terms of assembly, may assemble into a multicomponent structure.

The protein localises to the cytoplasm. It localises to the cytoskeleton. Its subcellular location is the spindle. In terms of biological role, involved in cytokinesis. This chain is Septin-2, found in Drosophila melanogaster (Fruit fly).